The primary structure comprises 319 residues: Ankyrin repeat domain-containing protein 1 (319 aa).

The stretch at 61–89 (KSEKQREAELKKKKLEQRSKLENLEDLEI) forms a coiled coil. ANK repeat units follow at residues 152–181 (YKRTALHRACLEGHLAIVEKLMEAGAQIEF), 185–214 (LESTAIHWASRGGNLDVLKLLLNKGAKISA), 218–247 (LLSTALHVAVRTGHYECAEHLIACEADLNA), 251–280 (EGDTPLHDAVRLNRYKMIRLLIMYGADLNI), and 284–315 (AGKTPMDLVLHWQNGTKAIFDSLRENSYKTSR).

As to quaternary structure, interacts with YBX1. Interacts with TTN/titin. Mainly expressed in activated vascular endothelial cells. To a lower extent, also expressed in hepatoma cells.

The protein resides in the nucleus. May play an important role in endothelial cell activation. May act as a nuclear transcription factor that negatively regulates the expression of cardiac genes. Induction seems to be correlated with apoptotic cell death in hepatoma cells. This is Ankyrin repeat domain-containing protein 1 (ANKRD1) from Homo sapiens (Human).